The chain runs to 198 residues: IMP cyclohydrolase (198 aa).

This sequence belongs to the archaeal IMP cyclohydrolase family.

The enzyme catalyses IMP + H2O = 5-formamido-1-(5-phospho-D-ribosyl)imidazole-4-carboxamide. It functions in the pathway purine metabolism; IMP biosynthesis via de novo pathway; IMP from 5-formamido-1-(5-phospho-D-ribosyl)imidazole-4-carboxamide: step 1/1. Its function is as follows. Catalyzes the cyclization of 5-formylamidoimidazole-4-carboxamide ribonucleotide to IMP. The protein is IMP cyclohydrolase of Thermococcus kodakarensis (strain ATCC BAA-918 / JCM 12380 / KOD1) (Pyrococcus kodakaraensis (strain KOD1)).